Here is a 152-residue protein sequence, read N- to C-terminus: Transcriptional repressor NrdR (152 aa).

The span at 1-10 shows a compositional bias: polar residues; the sequence is MKCPSCQHNG. Residues 1-21 are disordered; it reads MKCPSCQHNGSRVLDSRPADE. The segment at 3-34 is a zinc-finger region; that stretch reads CPSCQHNGSRVLDSRPADEGKSIRRRRECEAC. The 91-residue stretch at 49-139 folds into the ATP-cone domain; it reads LIVVKKEGVR…VYRQFKDINV (91 aa).

It belongs to the NrdR family. Zn(2+) is required as a cofactor.

Its function is as follows. Negatively regulates transcription of bacterial ribonucleotide reductase nrd genes and operons by binding to NrdR-boxes. The chain is Transcriptional repressor NrdR from Bacillus velezensis (strain DSM 23117 / BGSC 10A6 / LMG 26770 / FZB42) (Bacillus amyloliquefaciens subsp. plantarum).